The following is a 462-amino-acid chain: 3-ketoacyl CoA thiolase 1, peroxisomal (462 aa).

The N-terminal 34 residues, 1-34, are a transit peptide targeting the peroxisome; it reads MEKAIQRQRVLLEHLQPIRHHTHDHSSSLTTSIC. Cys138 serves as the catalytic Acyl-thioester intermediate. Residues His393 and Cys425 each act as proton acceptor in the active site. Substrate is bound at residue Gly427.

The protein belongs to the thiolase-like superfamily. Thiolase family. Homodimer.

The protein resides in the peroxisome. The enzyme catalyses an acyl-CoA + acetyl-CoA = a 3-oxoacyl-CoA + CoA. It participates in aromatic compound metabolism. Its pathway is lipid metabolism; fatty acid metabolism. Its function is as follows. Component of the floral volatile benzenoid/phenylpropanoid (FVBP) biosynthetic pathway. Thiolase that catalyzes the conversion of 3-oxo-3-phenylpropionyl-CoA (benzoylacetyl-CoA) to benzoyl-CoA. This Petunia hybrida (Petunia) protein is 3-ketoacyl CoA thiolase 1, peroxisomal.